The sequence spans 147 residues: uncharacterized protein (147 aa).

The disordered stretch occupies residues 1-37 (MVALFKSSLGRPEQHQTPQIRISPASSNVEHSEKQPR). The span at 15–29 (HQTPQIRISPASSNV) shows a compositional bias: polar residues. Residues 71 to 147 (PIPVTKEELA…LKTSFVGFLV (77 aa)) enclose the Cytochrome b5 heme-binding domain. Positions 106 and 129 each coordinate heme.

Belongs to the cytochrome b5 family.

This is an uncharacterized protein from Schizosaccharomyces pombe (strain 972 / ATCC 24843) (Fission yeast).